Consider the following 661-residue polypeptide: Kininogen-1 (661 aa).

A signal peptide spans 1–20 (MKLITTLLLCSGLLLTLTQG). Positions 28 to 131 (CNDEAVFQAV…TQTCKIAPSK (104 aa)) constitute a Cystatin kininogen-type 1 domain. 9 cysteine pairs are disulfide-bonded: Cys28/Cys631, Cys83/Cys94, Cys107/Cys125, Cys141/Cys144, Cys205/Cys217, Cys228/Cys247, Cys263/Cys266, Cys327/Cys339, and Cys350/Cys369. Asn82 is a glycosylation site (N-linked (GlcNAc...) asparagine). The Cystatin kininogen-type 2 domain occupies 150–253 (TDSPDLEPVL…SQSCTLYSGD (104 aa)). Residues Asn168 and Asn204 are each glycosylated (N-linked (GlcNAc...) asparagine). A glycan (N-linked (GlcNAc...) asparagine) is linked at Asn242. Positions 272–375 (VDSPELKEVL…TVKCQALDMT (104 aa)) constitute a Cystatin kininogen-type 3 domain. A Phosphoserine modification is found at Ser331. 3 disordered regions span residues 405-471 (YIAR…LGHG), 485-583 (DGDD…FQDS), and 626-661 (ATSP…DALS). Basic residues-rich tracts occupy residues 434–471 (KANK…LGHG) and 492–526 (TVGH…HGKH). Residues 541–555 (TESLASSSEYSTTST) are compositionally biased toward low complexity. Residues 650–661 (EFSDFDLLDALS) show a composition bias toward acidic residues.

Isoform LMW interacts with CRISP3. In terms of processing, bradykinin is released from kininogen by plasma kallikrein. Phosphorylated by FAM20C in the extracellular medium. Post-translationally, bradykinin is inactivated by ACE, which removes the dipeptide Arg-Phe from its C-terminus. In terms of tissue distribution, plasma.

It is found in the secreted. The protein resides in the extracellular space. Kininogens are inhibitors of thiol proteases. HMW-kininogen plays an important role in blood coagulation by helping to position optimally prekallikrein and factor XI next to factor XII; HMW-kininogen inhibits the thrombin- and plasmin-induced aggregation of thrombocytes. LMW-kininogen inhibits the aggregation of thrombocytes. LMW-kininogen is in contrast to HMW-kininogen not involved in blood clotting. Functionally, the active peptide bradykinin is a potent vasodilatator that is released from HMW-kininogen shows a variety of physiological effects: (A) influence in smooth muscle contraction, (B) induction of hypotension, (C) natriuresis and diuresis, (D) decrease in blood glucose level, (E) it is a mediator of inflammation and causes (E1) increase in vascular permeability, (E2) stimulation of nociceptors (4E3) release of other mediators of inflammation (e.g. prostaglandins), (F) it has a cardioprotective effect (directly via bradykinin action, indirectly via endothelium-derived relaxing factor action). The chain is Kininogen-1 (Kng1) from Mus musculus (Mouse).